The chain runs to 681 residues: Probable L-type lectin-domain containing receptor kinase S.7 (681 aa).

Residues 1–21 (MSLSRKLLVIFFTWITALSMS) form the signal peptide. Over 22-305 (KPIFVSSDNM…PSKKRRHRHN (284 aa)) the chain is Extracellular. The interval 30–265 (NMNFTFKSFT…IHLIENWSFK (236 aa)) is legume-lectin like. N-linked (GlcNAc...) asparagine glycosylation is found at N32, N42, N86, N121, N135, N261, and N281. Residues 306–326 (LAIGLGISCPVLICLALFVFG) form a helical membrane-spanning segment. Residues 327-681 (YFTLKKWKSV…EGDSIVYVVS (355 aa)) lie on the Cytoplasmic side of the membrane. The Protein kinase domain occupies 365–643 (FHSSRVIGRG…RVLQILNNEI (279 aa)). ATP is bound by residues 371–379 (IGRGAFGNV) and K394. D493 functions as the Proton acceptor in the catalytic mechanism.

This sequence in the C-terminal section; belongs to the protein kinase superfamily. Ser/Thr protein kinase family. In the N-terminal section; belongs to the leguminous lectin family.

It is found in the cell membrane. The enzyme catalyses L-seryl-[protein] + ATP = O-phospho-L-seryl-[protein] + ADP + H(+). It carries out the reaction L-threonyl-[protein] + ATP = O-phospho-L-threonyl-[protein] + ADP + H(+). Its function is as follows. Involved in resistance response to the pathogenic oomycetes Phytophthora infestans and Phytophthora capsici. This chain is Probable L-type lectin-domain containing receptor kinase S.7, found in Arabidopsis thaliana (Mouse-ear cress).